The following is a 440-amino-acid chain: Thymidine phosphorylase (440 aa).

Belongs to the thymidine/pyrimidine-nucleoside phosphorylase family. Homodimer.

It carries out the reaction thymidine + phosphate = 2-deoxy-alpha-D-ribose 1-phosphate + thymine. Its pathway is pyrimidine metabolism; dTMP biosynthesis via salvage pathway; dTMP from thymine: step 1/2. Its function is as follows. The enzymes which catalyze the reversible phosphorolysis of pyrimidine nucleosides are involved in the degradation of these compounds and in their utilization as carbon and energy sources, or in the rescue of pyrimidine bases for nucleotide synthesis. In Shigella flexneri serotype 5b (strain 8401), this protein is Thymidine phosphorylase.